The chain runs to 511 residues: Glycerol kinase (511 aa).

Threonine 11 is a binding site for ADP. 3 residues coordinate ATP: threonine 11, serine 12, and serine 13. Threonine 11 provides a ligand contact to sn-glycerol 3-phosphate. Residue arginine 15 participates in ADP binding. Sn-glycerol 3-phosphate contacts are provided by arginine 81, glutamate 82, tyrosine 133, and aspartate 242. Residues arginine 81, glutamate 82, tyrosine 133, aspartate 242, and glutamine 243 each contribute to the glycerol site. Residues threonine 264 and glycine 321 each contribute to the ADP site. 4 residues coordinate ATP: threonine 264, glycine 321, glutamine 325, and glycine 426. ADP-binding residues include glycine 426 and asparagine 430.

The protein belongs to the FGGY kinase family.

It carries out the reaction glycerol + ATP = sn-glycerol 3-phosphate + ADP + H(+). Its pathway is polyol metabolism; glycerol degradation via glycerol kinase pathway; sn-glycerol 3-phosphate from glycerol: step 1/1. Its activity is regulated as follows. Inhibited by fructose 1,6-bisphosphate (FBP). Its function is as follows. Key enzyme in the regulation of glycerol uptake and metabolism. Catalyzes the phosphorylation of glycerol to yield sn-glycerol 3-phosphate. This is Glycerol kinase from Verminephrobacter eiseniae (strain EF01-2).